An 876-amino-acid polypeptide reads, in one-letter code: Alanine--tRNA ligase (876 aa).

Zn(2+) contacts are provided by H565, H569, C667, and H671.

It belongs to the class-II aminoacyl-tRNA synthetase family. The cofactor is Zn(2+).

Its subcellular location is the cytoplasm. It carries out the reaction tRNA(Ala) + L-alanine + ATP = L-alanyl-tRNA(Ala) + AMP + diphosphate. Its function is as follows. Catalyzes the attachment of alanine to tRNA(Ala) in a two-step reaction: alanine is first activated by ATP to form Ala-AMP and then transferred to the acceptor end of tRNA(Ala). Also edits incorrectly charged Ser-tRNA(Ala) and Gly-tRNA(Ala) via its editing domain. The protein is Alanine--tRNA ligase of Desulfosudis oleivorans (strain DSM 6200 / JCM 39069 / Hxd3) (Desulfococcus oleovorans).